Reading from the N-terminus, the 92-residue chain is MANSAQARKRARQAAKANSHNSALRSKFRTAIKAVRKAIDAGDKAKAAEIFLASSKTIDIIADKKIVHKNKAARHKSRLAAAIKGLQAPAAQ.

Positions 1 to 24 are disordered; sequence MANSAQARKRARQAAKANSHNSAL.

The protein belongs to the bacterial ribosomal protein bS20 family.

In terms of biological role, binds directly to 16S ribosomal RNA. The polypeptide is Small ribosomal subunit protein bS20 (Paraburkholderia xenovorans (strain LB400)).